The following is a 584-amino-acid chain: MLKNKTRAEKYQTYYTTNEYQIVKEKLPDIIRDAEIKASEVLEPTIYEKRAIMEVIKDFIRDHQRKVYGGTALNEALKQVNPKDAIYDNYSFSDIEFYSPTPVQDLVDLCNILYRKGYKFVQGKDAQHEETYSIFVNFQLYCDITYSPTRVFYGIKTIEIDGINYTDPHFMLIDYLRMVNQPLTAAGQRWEKAFERMYRLLKDYPIEDFDKRLDIPEPPEEIQSYISRIKTEFLSDNKLNESFLISGIEAYNFYIRHAASSKDEEQMARTNRNVVNLNNFIANVPFSELISVNYREDVKNTYNFLRMIVEDKEKISVDEYFPLFQFTGYSTVIKYDDHPIIRIYEGDGYCIPNVKTVKTVENDNGTKTKYEYKYVSFQYVLMILYINKFRAHLDKNKPMYFNYGIAISNLVKARNIYLDQTGKSVLDNTVFKEFRTNCTGNTISFTRMNRLRLLEKRKQGKQTSFVYTPEDFFKKDLETQAKLDPSKARFKNTSGNKIMVPKYLLFKIDNNGNIEDNIHSEEAEISEKEETSGGSSISTDKSFEESPNSSPNSSPNNSLNNSIDISTNNYDDRSENSLDSLTSD.

Over residues 522–531 (EAEISEKEET) the composition is skewed to basic and acidic residues. The disordered stretch occupies residues 522–584 (EAEISEKEET…ENSLDSLTSD (63 aa)). Residues 546–569 (SPNSSPNSSPNNSLNNSIDISTNN) are compositionally biased toward low complexity.

This sequence belongs to the poxviridae poly(A) polymerase catalytic subunit family. Highly divergent.

It is found in the virion. The catalysed reaction is RNA(n) + ATP = RNA(n)-3'-adenine ribonucleotide + diphosphate. Polymerase that creates the 3'-poly(A) tail of mRNA's. This Acanthamoeba polyphaga (Amoeba) protein is Putative poly(A) polymerase catalytic subunit.